Reading from the N-terminus, the 468-residue chain is 3-isopropylmalate dehydratase large subunit (468 aa).

Cysteine 346, cysteine 406, and cysteine 409 together coordinate [4Fe-4S] cluster.

It belongs to the aconitase/IPM isomerase family. LeuC type 1 subfamily. As to quaternary structure, heterodimer of LeuC and LeuD. [4Fe-4S] cluster serves as cofactor.

It carries out the reaction (2R,3S)-3-isopropylmalate = (2S)-2-isopropylmalate. The protein operates within amino-acid biosynthesis; L-leucine biosynthesis; L-leucine from 3-methyl-2-oxobutanoate: step 2/4. Its function is as follows. Catalyzes the isomerization between 2-isopropylmalate and 3-isopropylmalate, via the formation of 2-isopropylmaleate. The protein is 3-isopropylmalate dehydratase large subunit of Pseudoalteromonas atlantica (strain T6c / ATCC BAA-1087).